We begin with the raw amino-acid sequence, 225 residues long: Endonuclease V (225 aa).

Positions 43 and 110 each coordinate Mg(2+). 2 interaction with target DNA regions span residues 139-141 and 214-221; these read KSR and HIYTQRLK.

The protein belongs to the endonuclease V family. Requires Mg(2+) as cofactor.

The protein resides in the cytoplasm. It catalyses the reaction Endonucleolytic cleavage at apurinic or apyrimidinic sites to products with a 5'-phosphate.. In terms of biological role, DNA repair enzyme involved in the repair of deaminated bases. Selectively cleaves double-stranded DNA at the second phosphodiester bond 3' to a deoxyinosine leaving behind the intact lesion on the nicked DNA. In vitro, can also cleave single-stranded substrates with inosine, double-stranded DNA with apurinic sites, or DNA sites with uracil or a mismatched base. When present in molar excess, two protein molecules can bind to the same DNA substrate and effect cleavage of both strands (in vitro). This chain is Endonuclease V, found in Thermotoga maritima (strain ATCC 43589 / DSM 3109 / JCM 10099 / NBRC 100826 / MSB8).